A 426-amino-acid chain; its full sequence is Histidine--tRNA ligase (426 aa).

Belongs to the class-II aminoacyl-tRNA synthetase family. As to quaternary structure, homodimer.

The protein resides in the cytoplasm. The catalysed reaction is tRNA(His) + L-histidine + ATP = L-histidyl-tRNA(His) + AMP + diphosphate + H(+). The chain is Histidine--tRNA ligase from Geobacillus kaustophilus (strain HTA426).